The sequence spans 241 residues: Ubiquinone biosynthesis O-methyltransferase (241 aa).

The S-adenosyl-L-methionine site is built by arginine 44, glycine 63, aspartate 84, and methionine 128.

It belongs to the methyltransferase superfamily. UbiG/COQ3 family.

The enzyme catalyses a 3-demethylubiquinol + S-adenosyl-L-methionine = a ubiquinol + S-adenosyl-L-homocysteine + H(+). It carries out the reaction a 3-(all-trans-polyprenyl)benzene-1,2-diol + S-adenosyl-L-methionine = a 2-methoxy-6-(all-trans-polyprenyl)phenol + S-adenosyl-L-homocysteine + H(+). It participates in cofactor biosynthesis; ubiquinone biosynthesis. Functionally, O-methyltransferase that catalyzes the 2 O-methylation steps in the ubiquinone biosynthetic pathway. This chain is Ubiquinone biosynthesis O-methyltransferase, found in Hydrogenovibrio crunogenus (strain DSM 25203 / XCL-2) (Thiomicrospira crunogena).